Reading from the N-terminus, the 476-residue chain is Oogenesin-2 (476 aa).

One copy of the LRR 1; degenerate repeat lies at 97-121 (RCKLREITLSHDLVVVWAGSHEVEG). Residues 176–200 (HLHCRKLKIYGLTKAAVIEMFKIVH) form an LRR 2; degenerate repeat. An LRR 3; degenerate repeat occupies 201-226 (AEYIEDLELSCLCLEYLDFLNPYLKQ). Residues 227-264 (MSNLLSLTLDEIIYTLNIDDYRNLNEEKVITVISHLPT) form an LRR 4; degenerate repeat. 4 LRR repeats span residues 265 to 285 (FHHL…LRCL), 286 to 317 (KKPL…FELR), 342 to 369 (RHTL…ALSQ), and 370 to 394 (CYQL…LLHH).

This sequence belongs to the PRAME family. Expressed in ovary, specifically in oocytes. Detected in follicles with two layers of granulosa cells, and are present in early as well as large antral follicles.

The sequence is that of Oogenesin-2 from Mus musculus (Mouse).